The sequence spans 309 residues: Transcription termination/antitermination protein NusG (309 aa).

2 disordered regions span residues 1–24 (MSDPNLNDDATEPRGLAADTADDE) and 58–91 (EGDHIAETDEDIEAGAVETDEDVETDTDEDVEAG). Residues 65–91 (TDEDIEAGAVETDEDVETDTDEDVEAG) are compositionally biased toward acidic residues.

It belongs to the NusG family.

In terms of biological role, participates in transcription elongation, termination and antitermination. The polypeptide is Transcription termination/antitermination protein NusG (Streptomyces galbus).